Here is a 293-residue protein sequence, read N- to C-terminus: Ribosomal RNA small subunit methyltransferase A (293 aa).

6 residues coordinate S-adenosyl-L-methionine: Asn-29, Leu-31, Gly-56, Glu-77, Asp-102, and Asn-127.

This sequence belongs to the class I-like SAM-binding methyltransferase superfamily. rRNA adenine N(6)-methyltransferase family. RsmA subfamily.

The protein localises to the cytoplasm. It carries out the reaction adenosine(1518)/adenosine(1519) in 16S rRNA + 4 S-adenosyl-L-methionine = N(6)-dimethyladenosine(1518)/N(6)-dimethyladenosine(1519) in 16S rRNA + 4 S-adenosyl-L-homocysteine + 4 H(+). Specifically dimethylates two adjacent adenosines (A1518 and A1519) in the loop of a conserved hairpin near the 3'-end of 16S rRNA in the 30S particle. May play a critical role in biogenesis of 30S subunits. The polypeptide is Ribosomal RNA small subunit methyltransferase A (Geobacillus thermodenitrificans (strain NG80-2)).